A 265-amino-acid chain; its full sequence is Tryptophan synthase alpha chain (265 aa).

Catalysis depends on proton acceptor residues E48 and D59.

Belongs to the TrpA family. As to quaternary structure, tetramer of two alpha and two beta chains.

It catalyses the reaction (1S,2R)-1-C-(indol-3-yl)glycerol 3-phosphate + L-serine = D-glyceraldehyde 3-phosphate + L-tryptophan + H2O. The protein operates within amino-acid biosynthesis; L-tryptophan biosynthesis; L-tryptophan from chorismate: step 5/5. Functionally, the alpha subunit is responsible for the aldol cleavage of indoleglycerol phosphate to indole and glyceraldehyde 3-phosphate. In Vesicomyosocius okutanii subsp. Calyptogena okutanii (strain HA), this protein is Tryptophan synthase alpha chain.